The chain runs to 439 residues: Mitochondrial distribution and morphology protein 12 (439 aa).

In terms of domain architecture, SMP-LTD spans 1-439 (MSIDINWEAA…VYPSFWTFLV (439 aa)). Positions 71 to 84 (EEDEGDEDFSDDQD) are enriched in acidic residues. Disordered regions lie at residues 71–104 (EEDEGDEDFSDDQDGAPKHPPTIATERSGAGTWQ), 182–278 (TPLA…HEKK), and 362–385 (YIPGINPIGGGASGGAASSRRRDD). Basic and acidic residues predominate over residues 212–229 (DYPRPVHRQTDTDIDSGH). Polar residues predominate over residues 230–255 (SRPSTADTLNSINSQRISNPALSHPH). A compositionally biased stretch (basic and acidic residues) spans 256–269 (SSNESHPDTRDHSP).

The protein belongs to the MDM12 family. In terms of assembly, component of the ER-mitochondria encounter structure (ERMES) or MDM complex, composed of MMM1, MDM10, MDM12 and MDM34. An MMM1 homodimer associates with one molecule of MDM12 on each side in a pairwise head-to-tail manner, and the SMP-LTD domains of MMM1 and MDM12 generate a continuous hydrophobic tunnel for phospholipid trafficking.

The protein localises to the mitochondrion outer membrane. It localises to the endoplasmic reticulum membrane. Component of the ERMES/MDM complex, which serves as a molecular tether to connect the endoplasmic reticulum (ER) and mitochondria. Components of this complex are involved in the control of mitochondrial shape and protein biogenesis, and function in nonvesicular lipid trafficking between the ER and mitochondria. MDM12 is required for the interaction of the ER-resident membrane protein MMM1 and the outer mitochondrial membrane-resident beta-barrel protein MDM10. The MDM12-MMM1 subcomplex functions in the major beta-barrel assembly pathway that is responsible for biogenesis of all mitochondrial outer membrane beta-barrel proteins, and acts in a late step after the SAM complex. The MDM10-MDM12-MMM1 subcomplex further acts in the TOM40-specific pathway after the action of the MDM12-MMM1 complex. Essential for establishing and maintaining the structure of mitochondria and maintenance of mtDNA nucleoids. The sequence is that of Mitochondrial distribution and morphology protein 12 from Uncinocarpus reesii (strain UAMH 1704).